A 415-amino-acid polypeptide reads, in one-letter code: Phosphoglycerate kinase (415 aa).

Residues 27 to 29, Arg44, 67 to 70, Arg124, and Arg164 contribute to the substrate site; these read DIN and HQGR. ATP-binding positions include Glu336 and 362–365; that span reads GGHM.

It belongs to the phosphoglycerate kinase family. In terms of assembly, monomer.

The protein localises to the cytoplasm. It carries out the reaction (2R)-3-phosphoglycerate + ATP = (2R)-3-phospho-glyceroyl phosphate + ADP. It participates in carbohydrate degradation; glycolysis; pyruvate from D-glyceraldehyde 3-phosphate: step 2/5. The chain is Phosphoglycerate kinase from Sulfurisphaera tokodaii (strain DSM 16993 / JCM 10545 / NBRC 100140 / 7) (Sulfolobus tokodaii).